The following is a 265-amino-acid chain: Protein N-terminal and lysine N-methyltransferase EFM7 (265 aa).

The segment at 1–25 (MSSDHEEDSLYGATELFGEPDGFYE) is disordered. Residues Trp67, 93 to 95 (GAA), Asp115, Trp152, and Ser176 each bind S-adenosyl-L-methionine.

Belongs to the class I-like SAM-binding methyltransferase superfamily. EFM7 family.

It is found in the cytoplasm. Functionally, S-adenosyl-L-methionine-dependent protein methyltransferase that trimethylates the N-terminal glycine 'Gly-2' of elongation factor 1-alpha, before also catalyzing the mono- and dimethylation of 'Lys-3'. This chain is Protein N-terminal and lysine N-methyltransferase EFM7, found in Eremothecium gossypii (strain ATCC 10895 / CBS 109.51 / FGSC 9923 / NRRL Y-1056) (Yeast).